The chain runs to 527 residues: Serine/threonine-protein kinase NLK (527 aa).

Sufficient for interaction with DAPK3 stretches follow at residues 1 to 125 and 124 to 416; these read MSLC…KAHH and HHHQ…SKRI. Required for interaction with TAB2 regions lie at residues 1–304 and 434–527; these read MSLC…VVTQ and YHTC…LVWE. Disordered stretches follow at residues 22 to 72 and 90 to 140; these read AAAA…SSAA and QQPY…DIEP. The segment covering 26–54 has biased composition (basic residues); sequence GHHHHHHHHLPHLPPPHLHHHHHPQHHLH. The segment covering 103 to 119 has biased composition (low complexity); the sequence is PGPAAAAPAQVQAAAAA. The span at 122-131 shows a compositional bias: basic residues; the sequence is KAHHHQHSHH. Residues 138–427 enclose the Protein kinase domain; that stretch reads IEPDRPIGYG…AKDALAHPYL (290 aa). ATP contacts are provided by residues 144-152 and Lys-167; that span reads IGYGAFGVV. Asp-264 functions as the Proton acceptor in the catalytic mechanism. Phosphothreonine; by autocatalysis is present on Thr-298. Residues 298–300 carry the TQE motif; it reads TQE. The interval 428-527 is required for homodimerization and kinase activation and localization to the nucleus; sequence DEGRLRYHTC…EMPPSPLVWE (100 aa). Ser-522 carries the post-translational modification Phosphoserine.

This sequence belongs to the protein kinase superfamily. CMGC Ser/Thr protein kinase family. MAP kinase subfamily. As to quaternary structure, homodimer. Homodimerization is required for intermolecular autophosphorylation, kinase activation and nuclear localization. May interact with components of cullin-RING-based SCF (SKP1-CUL1-F-box protein) E3 ubiquitin-protein ligase complexes. Interacts with LEF1, MEF2A, MYBL1 and MYBL2. Interacts with the upstream activating kinases HIPK2 and MAP3K7/TAK1. Interaction with MAP3K7/TAK1 seems to be indirect, and may be mediated by other proteins such as STAT3, TAB1 and TAB2. Interacts with and phosphorylates a number of transcription factors including FOXO1, FOXO3, FOXO4, MYB, NOTCH1 and TCF7L2/TCF4. Interacts with DAPK3/ZIPK, and this interaction may disrupt interaction with transcription factors such as TCF7L2/TCF4. Interacts with RNF138/NARF. Interacts with ATF5; the interaction stabilizes ATF5 at the protein level in a kinase-independent manner. Mg(2+) is required as a cofactor. In terms of processing, phosphorylated on Thr-298. Intermolecular autophosphorylation on Thr-298 activates the enzyme.

Its subcellular location is the nucleus. The protein resides in the cytoplasm. It catalyses the reaction L-seryl-[protein] + ATP = O-phospho-L-seryl-[protein] + ADP + H(+). It carries out the reaction L-threonyl-[protein] + ATP = O-phospho-L-threonyl-[protein] + ADP + H(+). With respect to regulation, activated by dimerization and subsequent intermolecular autophosphorylation on Thr-298. Activated by the non-canonical Wnt signaling pathway, in which WNT5A treatment leads to activation of MAP3K7/TAK1 and HIPK2, which subsequently phosphorylates and activates this protein. Other cytokines such as IL6 may also activate this regulatory circuit. Its function is as follows. Serine/threonine-protein kinase that regulates a number of transcription factors with key roles in cell fate determination. Positive effector of the non-canonical Wnt signaling pathway, acting downstream of WNT5A, MAP3K7/TAK1 and HIPK2. Negative regulator of the canonical Wnt/beta-catenin signaling pathway. Binds to and phosphorylates TCF7L2/TCF4 and LEF1, promoting the dissociation of the TCF7L2/LEF1/beta-catenin complex from DNA, as well as the ubiquitination and subsequent proteolysis of LEF1. Together these effects inhibit the transcriptional activation of canonical Wnt/beta-catenin target genes. Negative regulator of the Notch signaling pathway. Binds to and phosphorylates NOTCH1, thereby preventing the formation of a transcriptionally active ternary complex of NOTCH1, RBPJ/RBPSUH and MAML1. Negative regulator of the MYB family of transcription factors. Phosphorylation of MYB leads to its subsequent proteolysis while phosphorylation of MYBL1 and MYBL2 inhibits their interaction with the coactivator CREBBP. Other transcription factors may also be inhibited by direct phosphorylation of CREBBP itself. Acts downstream of IL6 and MAP3K7/TAK1 to phosphorylate STAT3, which is in turn required for activation of NLK by MAP3K7/TAK1. Upon IL1B stimulus, cooperates with ATF5 to activate the transactivation activity of C/EBP subfamily members. Phosphorylates ATF5 but also stabilizes ATF5 protein levels in a kinase-independent manner. Acts as an inhibitor of the mTORC1 complex in response to osmotic stress by mediating phosphorylation of RPTOR, thereby preventing recruitment of the mTORC1 complex to lysosomes. The chain is Serine/threonine-protein kinase NLK (NLK) from Homo sapiens (Human).